The primary structure comprises 447 residues: MSDRKYFGTDGIRGKVGENLINPEFVMKLGWAAGKVLAGSGTNKVIIGKDTRISGYMLESALESGLSAAGINIGLLGPMPTPAIAYLTKTFRSEAGIVISASHNPYYDNGIKFFSADGSKLDDDIELAIEAEMDKPMQCVASDKLGKAVRIADAAGRYIEFCKGNFPSNLSLKGLKIVVDCAHGATYHIAPNVLSELGAEVIEIGTEPDGLNINRKVGATSMKAIVDSVIKHKADLGFALDGDGDRIMLVDHHGNVIDGDQIVYIIARDALKSGKLKGGVVGTVMSNLGLEVALSTLGVPFERSKVGDRYVLELLRQKGWSIGGEGSGHVLNLDAASTGDGIVAGLQVLAAMLNANMTLNELSRGMTKFPQTLINVRFNEGDTPLDAQDVKNSVLEAESALGERGRVLLRKSGTEPLIRVMVEANDATDSRKWAEHIADAVRKATGQ.

The active-site Phosphoserine intermediate is S102. Mg(2+) contacts are provided by S102, D241, D243, and D245. S102 carries the post-translational modification Phosphoserine.

The protein belongs to the phosphohexose mutase family. Requires Mg(2+) as cofactor. Activated by phosphorylation.

It catalyses the reaction alpha-D-glucosamine 1-phosphate = D-glucosamine 6-phosphate. Its function is as follows. Catalyzes the conversion of glucosamine-6-phosphate to glucosamine-1-phosphate. This Pseudoalteromonas atlantica (strain T6c / ATCC BAA-1087) protein is Phosphoglucosamine mutase.